We begin with the raw amino-acid sequence, 71 residues long: UPF0337 protein PPA1427 (71 aa).

Residues 20 to 46 (EKIGGLTDDSDLKSAGADQKASGKVAQ) form a disordered region.

It belongs to the UPF0337 (CsbD) family.

In Cutibacterium acnes (strain DSM 16379 / KPA171202) (Propionibacterium acnes), this protein is UPF0337 protein PPA1427.